The chain runs to 104 residues: Large ribosomal subunit protein eL42 (104 aa).

The interval 22–56 is disordered; the sequence is KVSQAKKSKDNPRAQGNRRYARKQRGYGGQTKPIL.

The protein belongs to the eukaryotic ribosomal protein eL42 family.

The polypeptide is Large ribosomal subunit protein eL42 (RPL44) (Encephalitozoon cuniculi (strain GB-M1) (Microsporidian parasite)).